We begin with the raw amino-acid sequence, 660 residues long: DNA ligase (660 aa).

Residues 33-37 (DFVYD), 82-83 (SL), and glutamate 110 contribute to the NAD(+) site. The active-site N6-AMP-lysine intermediate is lysine 112. 4 residues coordinate NAD(+): arginine 133, glutamate 167, lysine 281, and lysine 305. Residues cysteine 396, cysteine 399, cysteine 412, and cysteine 417 each contribute to the Zn(2+) site. The BRCT domain occupies 583–660 (DENRLLAGKK…SFEDIKSYLN (78 aa)).

This sequence belongs to the NAD-dependent DNA ligase family. LigA subfamily. Mg(2+) serves as cofactor. The cofactor is Mn(2+).

The catalysed reaction is NAD(+) + (deoxyribonucleotide)n-3'-hydroxyl + 5'-phospho-(deoxyribonucleotide)m = (deoxyribonucleotide)n+m + AMP + beta-nicotinamide D-nucleotide.. Its function is as follows. DNA ligase that catalyzes the formation of phosphodiester linkages between 5'-phosphoryl and 3'-hydroxyl groups in double-stranded DNA using NAD as a coenzyme and as the energy source for the reaction. It is essential for DNA replication and repair of damaged DNA. This chain is DNA ligase, found in Borrelia garinii subsp. bavariensis (strain ATCC BAA-2496 / DSM 23469 / PBi) (Borreliella bavariensis).